Consider the following 495-residue polypeptide: UDP-N-acetylmuramoyl-L-alanyl-D-glutamate--2,6-diaminopimelate ligase (495 aa).

UDP-N-acetyl-alpha-D-muramoyl-L-alanyl-D-glutamate is bound at residue Ser29. ATP is bound at residue 111 to 117 (GTNGKTS). UDP-N-acetyl-alpha-D-muramoyl-L-alanyl-D-glutamate contacts are provided by residues 153 to 154 (TT), Ser180, Gln186, and Arg188. Lys220 is modified (N6-carboxylysine). Meso-2,6-diaminopimelate-binding positions include Arg384, 408-411 (DNPR), Gly459, and Glu463. A Meso-diaminopimelate recognition motif motif is present at residues 408-411 (DNPR).

This sequence belongs to the MurCDEF family. MurE subfamily. Requires Mg(2+) as cofactor. Carboxylation is probably crucial for Mg(2+) binding and, consequently, for the gamma-phosphate positioning of ATP.

The protein resides in the cytoplasm. It catalyses the reaction UDP-N-acetyl-alpha-D-muramoyl-L-alanyl-D-glutamate + meso-2,6-diaminopimelate + ATP = UDP-N-acetyl-alpha-D-muramoyl-L-alanyl-gamma-D-glutamyl-meso-2,6-diaminopimelate + ADP + phosphate + H(+). Its pathway is cell wall biogenesis; peptidoglycan biosynthesis. Catalyzes the addition of meso-diaminopimelic acid to the nucleotide precursor UDP-N-acetylmuramoyl-L-alanyl-D-glutamate (UMAG) in the biosynthesis of bacterial cell-wall peptidoglycan. The polypeptide is UDP-N-acetylmuramoyl-L-alanyl-D-glutamate--2,6-diaminopimelate ligase (Xylella fastidiosa (strain Temecula1 / ATCC 700964)).